The chain runs to 461 residues: GTPase Der (461 aa).

2 EngA-type G domains span residues 2–166 and 199–370; these read IKVA…PKKP and IKVA…KNYS. Residues 8 to 15, 57 to 61, 118 to 121, 205 to 212, 252 to 256, and 316 to 319 contribute to the GTP site; these read GKPNVGKS, DTGGL, NKID, GRVNVGKS, DTAGI, and NKWD. Residues 371 to 455 enclose the KH-like domain; the sequence is KRIPTATLNK…PIIFVARKKG (85 aa).

This sequence belongs to the TRAFAC class TrmE-Era-EngA-EngB-Septin-like GTPase superfamily. EngA (Der) GTPase family. In terms of assembly, associates with the 50S ribosomal subunit.

GTPase that plays an essential role in the late steps of ribosome biogenesis. The protein is GTPase Der of Nautilia profundicola (strain ATCC BAA-1463 / DSM 18972 / AmH).